The chain runs to 390 residues: Elongation factor Tu 2 (390 aa).

Residues 10–203 form the tr-type G domain; it reads KPHLNIGTMG…AVDTYVPMPE (194 aa). The G1 stretch occupies residues 19–26; that stretch reads GHVDHGKT. Residue 19–26 coordinates GTP; sequence GHVDHGKT. Thr-26 contributes to the Mg(2+) binding site. Residues 60 to 64 are G2; sequence GITIN. The interval 81–84 is G3; it reads DMPG. GTP is bound by residues 81 to 85 and 136 to 139; these read DMPGH and NKAD. Residues 136–139 are G4; the sequence is NKAD. The tract at residues 173 to 175 is G5; sequence SGL.

It belongs to the TRAFAC class translation factor GTPase superfamily. Classic translation factor GTPase family. EF-Tu/EF-1A subfamily. As to quaternary structure, monomer.

The protein localises to the cytoplasm. It catalyses the reaction GTP + H2O = GDP + phosphate + H(+). Functionally, GTP hydrolase that promotes the GTP-dependent binding of aminoacyl-tRNA to the A-site of ribosomes during protein biosynthesis. The protein is Elongation factor Tu 2 of Streptomyces avermitilis (strain ATCC 31267 / DSM 46492 / JCM 5070 / NBRC 14893 / NCIMB 12804 / NRRL 8165 / MA-4680).